The following is a 173-amino-acid chain: Large ribosomal subunit protein bL9 (173 aa).

Belongs to the bacterial ribosomal protein bL9 family.

In terms of biological role, binds to the 23S rRNA. The chain is Large ribosomal subunit protein bL9 from Chlamydia felis (strain Fe/C-56) (Chlamydophila felis).